A 112-amino-acid chain; its full sequence is uncharacterized protein (112 aa).

The disordered stretch occupies residues 70 to 112 (GLYRGRRPPGRDAARPTTAILFAQGRPPLLDQRAPTRRGSHQR).

This is an uncharacterized protein from Homo sapiens (Human).